Consider the following 705-residue polypeptide: Elongation factor G (705 aa).

The 281-residue stretch at histidine 7 to leucine 287 folds into the tr-type G domain. Residues alanine 16–threonine 23, aspartate 84–histidine 88, and asparagine 138–aspartate 141 each bind GTP.

The protein belongs to the TRAFAC class translation factor GTPase superfamily. Classic translation factor GTPase family. EF-G/EF-2 subfamily.

The protein localises to the cytoplasm. Catalyzes the GTP-dependent ribosomal translocation step during translation elongation. During this step, the ribosome changes from the pre-translocational (PRE) to the post-translocational (POST) state as the newly formed A-site-bound peptidyl-tRNA and P-site-bound deacylated tRNA move to the P and E sites, respectively. Catalyzes the coordinated movement of the two tRNA molecules, the mRNA and conformational changes in the ribosome. This chain is Elongation factor G, found in Bacteroides thetaiotaomicron (strain ATCC 29148 / DSM 2079 / JCM 5827 / CCUG 10774 / NCTC 10582 / VPI-5482 / E50).